We begin with the raw amino-acid sequence, 536 residues long: Heparanase (536 aa).

A signal peptide spans 1-28 (MLRPLLLLWLWGRLGALTQGTPAGTAPT). Heparan sulfate group is bound by residues 55–57 (DAS) and Thr-90. Positions 103–150 (PTSEERSYWQSQDNNDICGSERVSADVLRKLQMEWPFQELLLLREQYQ) are cleaved as a propeptide — linker peptide. Cys-120 and Cys-172 are oxidised to a cystine. Residue 151 to 155 (REFKN) coordinates heparan sulfate group. 3 N-linked (GlcNAc...) asparagine glycosylation sites follow: Asn-155, Asn-193, and Asn-210. The active-site Proton donor is Glu-218. Heparan sulfate group contacts are provided by residues 263 to 273 (QPRGKTVKLLR), His-289, and Arg-296. Positions 281 to 410 (EVIDSLTWHH…LLFKKLVGPK (130 aa)) are required for heterodimerization with the heparanase 8 kDa subunit. The Nucleophile role is filled by Glu-336. Heparan sulfate group contacts are provided by residues 341-343 (YGG) and 382-384 (GNY). An intrachain disulfide couples Cys-430 to Cys-535. The N-linked (GlcNAc...) asparagine glycan is linked to Asn-452. The interval 520–536 (FSYGFFVIRNAKIAACI) is required for transferring proheparanase to the Golgi apparatus, secretion and subsequent enzyme activity and for enhancement of PKB/AKT1 phosphorylation.

Belongs to the glycosyl hydrolase 79 family. In terms of assembly, heterodimer; heterodimer formation between the 8 kDa and the 50 kDa subunits is required for enzyme activity. Interacts with TF; the interaction, inhibited by heparin, enhances the generation of activated factor X and activates coagulation. Interacts with HRG; the interaction is enhanced at acidic pH, partially inhibits binding of HPSE to cell surface receptors and modulates its enzymatic activity. Interacts with SDC1; the interaction enhances the shedding of SDC1. Interacts with HPSE2. Proteolytically processed. The cleavage of the 65 kDa form leads to the generation of a linker peptide, and the 8 kDa and 50 kDa products. The active form, the 8/50 kDa heterodimer, is resistant to degradation. Complete removal of the linker peptide appears to be a prerequisite to the complete activation of the enzyme. Post-translationally, N-glycosylated. Glycosylation of the 50 kDa subunit appears to be essential for its solubility.

It is found in the lysosome membrane. The protein localises to the secreted. It localises to the nucleus. It catalyses the reaction endohydrolysis of (1-&gt;4)-beta-D-glycosidic bonds of heparan sulfate chains in heparan sulfate proteoglycan.. With respect to regulation, inhibited by laminarin sulfate and, to a lower extent, by heparin and sulfamin. Activated by calcium and magnesium. Inhibited by EDTA. Endoglycosidase that cleaves heparan sulfate proteoglycans (HSPGs) into heparan sulfate side chains and core proteoglycans. Participates in extracellular matrix (ECM) degradation and remodeling. Selectively cleaves the linkage between a glucuronic acid unit and an N-sulfo glucosamine unit carrying either a 3-O-sulfo or a 6-O-sulfo group. Can also cleave the linkage between a glucuronic acid unit and an N-sulfo glucosamine unit carrying a 2-O-sulfo group, but not linkages between a glucuronic acid unit and a 2-O-sulfated iduronic acid moiety. It is essentially inactive at neutral pH but becomes active under acidic conditions such as during tumor invasion and in inflammatory processes. Facilitates cell migration associated with metastasis, wound healing and inflammation. Enhances shedding of syndecans, and increases endothelial invasion and angiogenesis in myelomas. Acts as a procoagulant by increasing the generation of activation factor X in the presence of tissue factor and activation factor VII. Increases cell adhesion to the extracellular matrix (ECM), independent of its enzymatic activity. Induces AKT1/PKB phosphorylation via lipid rafts increasing cell mobility and invasion. Heparin increases this AKT1/PKB activation. Regulates osteogenesis. Enhances angiogenesis through up-regulation of SRC-mediated activation of VEGF. Implicated in hair follicle inner root sheath differentiation and hair homeostasis. The protein is Heparanase (Hpse) of Rattus norvegicus (Rat).